The sequence spans 675 residues: DNA ligase (675 aa).

NAD(+)-binding positions include 36 to 40, 85 to 86, and glutamate 118; these read DAVYD and SL. The active-site N6-AMP-lysine intermediate is lysine 120. Arginine 141, glutamate 178, lysine 298, and lysine 322 together coordinate NAD(+). Residues cysteine 416, cysteine 419, cysteine 434, and cysteine 439 each contribute to the Zn(2+) site. The BRCT domain maps to 598–675; it reads TQPQTLSGKT…SEADLLALLQ (78 aa).

Belongs to the NAD-dependent DNA ligase family. LigA subfamily. The cofactor is Mg(2+). Mn(2+) serves as cofactor.

It carries out the reaction NAD(+) + (deoxyribonucleotide)n-3'-hydroxyl + 5'-phospho-(deoxyribonucleotide)m = (deoxyribonucleotide)n+m + AMP + beta-nicotinamide D-nucleotide.. DNA ligase that catalyzes the formation of phosphodiester linkages between 5'-phosphoryl and 3'-hydroxyl groups in double-stranded DNA using NAD as a coenzyme and as the energy source for the reaction. It is essential for DNA replication and repair of damaged DNA. In Acaryochloris marina (strain MBIC 11017), this protein is DNA ligase.